The chain runs to 550 residues: Hydroxylamine reductase (550 aa).

[2Fe-2S] cluster is bound by residues cysteine 3, cysteine 6, cysteine 18, and cysteine 25. Residues histidine 249, glutamate 273, cysteine 317, cysteine 405, cysteine 433, cysteine 458, glutamate 492, and lysine 494 each contribute to the hybrid [4Fe-2O-2S] cluster site. Residue cysteine 405 is modified to Cysteine persulfide.

This sequence belongs to the HCP family. [2Fe-2S] cluster is required as a cofactor. The cofactor is hybrid [4Fe-2O-2S] cluster.

It is found in the cytoplasm. The catalysed reaction is A + NH4(+) + H2O = hydroxylamine + AH2 + H(+). Functionally, catalyzes the reduction of hydroxylamine to form NH(3) and H(2)O. The polypeptide is Hydroxylamine reductase (Proteus mirabilis (strain HI4320)).